Here is a 23-residue protein sequence, read N- to C-terminus: Elongation factor Tu (23 aa).

This sequence belongs to the GTP-binding elongation factor family. EF-Tu/EF-1A subfamily. In terms of assembly, monomer. In terms of processing, the N-terminus is blocked. Post-translationally, the C-terminus may be subjected to proteolysis.

It localises to the cytoplasm. Functionally, this protein promotes the GTP-dependent binding of aminoacyl-tRNA to the A-site of ribosomes during protein biosynthesis. The chain is Elongation factor Tu (tuf) from Delftia acidovorans (Pseudomonas acidovorans).